The sequence spans 137 residues: Basic phospholipase A2 homolog MT1 (137 aa).

The N-terminal stretch at 1–16 is a signal peptide; sequence MRTLWIVALLLVGVEG. Intrachain disulfides connect Cys-42–Cys-131, Cys-44–Cys-60, Cys-59–Cys-111, Cys-65–Cys-137, Cys-66–Cys-104, Cys-73–Cys-97, and Cys-91–Cys-102. Residues 121–133 are important for membrane-damaging activities in eukaryotes and bacteria; heparin-binding; sequence KKYKAYFKFKCKK.

The protein belongs to the phospholipase A2 family. Group II subfamily. K49 sub-subfamily. As to quaternary structure, binds to heparin. Expressed by the venom gland.

The protein localises to the secreted. Heparin and wedelolactone inhibit the myotoxic activity. The PLA2 inhibitor, para-bromophenacyl bromide (BPB), inhibits the myotoxic activity. Snake venom phospholipase A2 homolog that lacks enzymatic activity. Has myotoxic activities. A model of myotoxic mechanism has been proposed: an apo Lys49-PLA2 is activated by the entrance of a hydrophobic molecule (e.g. fatty acid) at the hydrophobic channel of the protein leading to a reorientation of a monomer. This reorientation causes a transition between 'inactive' to 'active' states, causing alignment of C-terminal and membrane-docking sites (MDoS) side-by-side and putting the membrane-disruption sites (MDiS) in the same plane, exposed to solvent and in a symmetric position for both monomers. The MDoS region stabilizes the toxin on membrane by the interaction of charged residues with phospholipid head groups. Subsequently, the MDiS region destabilizes the membrane with penetration of hydrophobic residues. This insertion causes a disorganization of the membrane, allowing an uncontrolled influx of ions (i.e. calcium and sodium), and eventually triggering irreversible intracellular alterations and cell death. The chain is Basic phospholipase A2 homolog MT1 from Agkistrodon contortrix laticinctus (Broad-banded copperhead).